The chain runs to 178 residues: Cytochrome b6-f complex iron-sulfur subunit (178 aa).

Residues 20–42 (LLTFGSVTGVALGALYPVANYFI) form a helical membrane-spanning segment. The region spanning 65–161 (ASGWLSSHPE…VSVENDNVFV (97 aa)) is the Rieske domain. [2Fe-2S] cluster is bound by residues Cys-107, His-109, Cys-125, and His-128. Cys-112 and Cys-127 are oxidised to a cystine.

It belongs to the Rieske iron-sulfur protein family. As to quaternary structure, the 4 large subunits of the cytochrome b6-f complex are cytochrome b6, subunit IV (17 kDa polypeptide, PetD), cytochrome f and the Rieske protein, while the 4 small subunits are PetG, PetL, PetM and PetN. The complex functions as a dimer. The cofactor is [2Fe-2S] cluster.

Its subcellular location is the cellular thylakoid membrane. It carries out the reaction 2 oxidized [plastocyanin] + a plastoquinol + 2 H(+)(in) = 2 reduced [plastocyanin] + a plastoquinone + 4 H(+)(out). Component of the cytochrome b6-f complex, which mediates electron transfer between photosystem II (PSII) and photosystem I (PSI), cyclic electron flow around PSI, and state transitions. The sequence is that of Cytochrome b6-f complex iron-sulfur subunit from Synechococcus sp. (strain CC9605).